Here is an 80-residue protein sequence, read N- to C-terminus: MNEKSYQSNPDDRSDNVEKLQDMIENTLDNIDESEAAMALSTDQEKQMIKQKNENRKMSIDAMRSEIKDEEAARKNGYTE.

This sequence belongs to the Tlp family.

The protein localises to the spore core. The polypeptide is Small, acid-soluble spore protein Tlp (Bacillus pumilus (strain SAFR-032)).